The sequence spans 121 residues: Large ribosomal subunit protein bL17 (121 aa).

The protein belongs to the bacterial ribosomal protein bL17 family. Part of the 50S ribosomal subunit. Contacts protein L32.

The protein is Large ribosomal subunit protein bL17 of Metamycoplasma arthritidis (strain 158L3-1) (Mycoplasma arthritidis).